The sequence spans 166 residues: Cofilin-1 (166 aa).

At alanine 2 the chain carries N-acetylalanine. Serine 3 is subject to Phosphoserine; by NRK. The ADF-H domain maps to 4–153; sequence GVAVSDGVIK…KDRCTLAEKL (150 aa). Position 8 is a phosphoserine (serine 8). Lysine 13 bears the N6-acetyllysine mark. Threonine 25 bears the Phosphothreonine mark. The short motif at 30-34 is the Nuclear localization signal element; the sequence is KKRKK. Serine 41 carries the post-translational modification Phosphoserine. A Phosphothreonine modification is found at threonine 63. Tyrosine 68 carries the post-translational modification Phosphotyrosine. The residue at position 73 (lysine 73) is an N6-acetyllysine. Tyrosine 82 is subject to Phosphotyrosine. At serine 108 the chain carries Phosphoserine. Residue lysine 132 forms a Glycyl lysine isopeptide (Lys-Gly) (interchain with G-Cter in SUMO2) linkage. Tyrosine 140 is subject to Phosphotyrosine. Lysine 144 is subject to N6-acetyllysine. Residue serine 156 is modified to Phosphoserine.

Belongs to the actin-binding proteins ADF family. Can bind G- and F-actin in a 1:1 ratio of cofilin to actin. It is a major component of intranuclear and cytoplasmic actin rods. Interacts with the subcortical maternal complex (SCMC) via interaction with TLE6 isoform 1 and NLRP5. Interacts with C9orf72. As to quaternary structure, (Microbial infection) Interacts with human respiratory syncytial virus (HRSV) matrix protein; this interaction probably facilitates viral replication. Inactivated by phosphorylation on Ser-3. Phosphorylated on Ser-3 in resting cells. Dephosphorylated by PDXP/chronophin; this restores its activity in promoting actin filament depolymerization. The phosphorylation of Ser-24 may prevent recognition of the nuclear localization signal. Phosphorylated via a ARRB1-RAC1-LIMK1-PAK1 cascade upon active ligand stimulation of atypical chemokine receptor ACKR2. In terms of tissue distribution, widely distributed in various tissues.

It is found in the nucleus matrix. Its subcellular location is the cytoplasm. It localises to the cytoskeleton. The protein resides in the cell projection. The protein localises to the ruffle membrane. It is found in the lamellipodium membrane. Its subcellular location is the lamellipodium. It localises to the growth cone. The protein resides in the axon. Binds to F-actin and exhibits pH-sensitive F-actin depolymerizing activity. In conjunction with the subcortical maternal complex (SCMC), plays an essential role for zygotes to progress beyond the first embryonic cell divisions via regulation of actin dynamics. Required for the centralization of the mitotic spindle and symmetric division of zygotes. Plays a role in the regulation of cell morphology and cytoskeletal organization in epithelial cells. Required for the up-regulation of atypical chemokine receptor ACKR2 from endosomal compartment to cell membrane, increasing its efficiency in chemokine uptake and degradation. Required for neural tube morphogenesis and neural crest cell migration. In Homo sapiens (Human), this protein is Cofilin-1 (CFL1).